A 413-amino-acid polypeptide reads, in one-letter code: Aspartate kinase (413 aa).

2 consecutive ACT domains span residues 267-341 (LTIR…GDTK) and 347-413 (IVGV…RQGE).

It belongs to the aspartokinase family. In terms of assembly, homotrimer. In the presence of inhibitory amino acids the Stokes radius of the protein increases, suggesting its oligomeric state may change.

It is found in the cytoplasm. It catalyses the reaction L-aspartate + ATP = 4-phospho-L-aspartate + ADP. Its pathway is amino-acid biosynthesis; L-lysine biosynthesis via DAP pathway; (S)-tetrahydrodipicolinate from L-aspartate: step 1/4. The protein operates within amino-acid biosynthesis; L-methionine biosynthesis via de novo pathway; L-homoserine from L-aspartate: step 1/3. It functions in the pathway amino-acid biosynthesis; L-threonine biosynthesis; L-threonine from L-aspartate: step 1/5. Activated by L-lysine, L-methionine, and L-isoleucine. L-threonine, at low concentrations, is a mild activator and has a weak inhibitory effect only at concentrations over 10 mM. Strongly feedback inhibited by the concerted combination of L-lysine and L-threonine and slightly feedback inhibited by the concerted combination of L-threonine and L-methionine. Activated by the combination of L-methionine and L-lysine, L-methionine and L-isoleucine and L-lysine and L-isoleucine. Involved in the biosynthesis of L-aspartate-beta-semialdehyde which is a central intermediate in the biosynthesis of different amino acids (L-lysine, L-methionine, L-threonine). Catalyzes the phosphorylation of the beta-carboxyl group of L-aspartate to yield 4-phospho-L-aspartate. The sequence is that of Aspartate kinase from Pseudomonas fluorescens (strain SBW25).